The primary structure comprises 503 residues: Nuclear respiratory factor 1 (503 aa).

A dimerization region spans residues 1–78; it reads MEEHGVTQTE…AHLAAAGPVG (78 aa). The tract at residues 36-57 is disordered; the sequence is SMLSADEDSPSSPEDTSYDDSD. Phosphoserine; by CK2 occurs at positions 39, 44, 46, 47, and 52. The Nuclear localization signal motif lies at 88–116; the sequence is GKKRKRPHVFESNPSIRKRQQTRLLRKLR. The DNA-binding element occupies 109–305; it reads TRLLRKLRAT…SIAHLVPSQT (197 aa). Lys139 participates in a covalent cross-link: Glycyl lysine isopeptide (Lys-Gly) (interchain with G-Cter in SUMO2). The segment at 301 to 476 is required for transcriptional activation; the sequence is VPSQTVVQTF…AQGNGPVQVA (176 aa).

The protein belongs to the NRF1/Ewg family. Homodimer. Binds DNA as a dimer. Interacts with PPRC1. Post-translationally, phosphorylation enhances DNA binding. As to expression, ubiquitously expressed with strongest expression in skeletal muscle.

It localises to the nucleus. Functionally, transcription factor that activates the expression of the EIF2S1 (EIF2-alpha) gene. Links the transcriptional modulation of key metabolic genes to cellular growth and development. Implicated in the control of nuclear genes required for respiration, heme biosynthesis, and mitochondrial DNA transcription and replication. This Homo sapiens (Human) protein is Nuclear respiratory factor 1 (NRF1).